The following is a 394-amino-acid chain: Acetate kinase (394 aa).

Asn8 serves as a coordination point for Mg(2+). Lys15 is an ATP binding site. Arg86 serves as a coordination point for substrate. Asp143 (proton donor/acceptor) is an active-site residue. ATP-binding positions include 201 to 205, 276 to 278, and 324 to 328; these read HLGNG, DCR, and GIGEN. Glu378 is a Mg(2+) binding site.

This sequence belongs to the acetokinase family. In terms of assembly, homodimer. Mg(2+) serves as cofactor. Requires Mn(2+) as cofactor.

Its subcellular location is the cytoplasm. The enzyme catalyses acetate + ATP = acetyl phosphate + ADP. Its pathway is metabolic intermediate biosynthesis; acetyl-CoA biosynthesis; acetyl-CoA from acetate: step 1/2. Functionally, catalyzes the formation of acetyl phosphate from acetate and ATP. Can also catalyze the reverse reaction. This Dichelobacter nodosus (strain VCS1703A) protein is Acetate kinase.